We begin with the raw amino-acid sequence, 679 residues long: MSKNLLIELGLEELPAYVVTPSEKQLGERLATFLTENRLSFEDIQTFSTPRRLAVRVSGLADQQTDLTEDFKGPAKKIALDADGNFSKAAQGFVRGKGLTTDAIEFREVKGEEYVYVTKHEAGKPAKEVLLGVTEVLSAMTFPVSMHWANNSFEYIRPVHTLTVLLNDEALELDFLDIHSGRVSRGHRFLGTETTITSADSYEADLRSQCVIVDAKERQEMIVEQIKTLEVEQGVQVDIDEDLLNEVLNLVEFPTAFMGNFEAKYLDVPEEVLVTSMKNHQRYFVVRDQAGHLMPNFVSVRNGNDQAIENVIKGNEKVLVARLEDGEFFWREDQKLQIADLVAKLTNVTFHEKIGSLAEHMDRTRVIAASLAKEANLSAEEVTAVDRAAQIYKFDLLTGMVGEFDELQGIMGEKYALLAGEDAAVATAIREHYLPDAAGGALPETKVGAVLALADKLDTLLSFFSVGLIPSGSNDPYALRRATQGIVRILDHFGWRIPMDKLVDSLYDLSFDSLTYTNKADVMNFIRARVDKMMGKAAPKDIREAILASSTFVVPEMLAVAEALVKASHTENYKPAVESLSRAFNLAEKADASVQVDPSLFENEQENTLFAAIQGLTLAGSAAQQLEQVFALSPVINDFFDNTMVMAEDQALKNNRVAILSDLVSKAKTIAAFNQLNTK.

Belongs to the class-II aminoacyl-tRNA synthetase family. In terms of assembly, tetramer of two alpha and two beta subunits.

It is found in the cytoplasm. It carries out the reaction tRNA(Gly) + glycine + ATP = glycyl-tRNA(Gly) + AMP + diphosphate. This chain is Glycine--tRNA ligase beta subunit, found in Streptococcus pyogenes serotype M28 (strain MGAS6180).